We begin with the raw amino-acid sequence, 344 residues long: Dihydroorotase (344 aa).

Positions 14 and 16 each coordinate Zn(2+). Residues 16–18 (HLR) and Asn42 each bind substrate. Zn(2+)-binding residues include Lys100, His137, and His175. N6-carboxylysine is present on Lys100. Position 137 (His137) interacts with substrate. Leu220 contacts substrate. A Zn(2+)-binding site is contributed by Asp248. Residue Asp248 is part of the active site. His252 and Ala264 together coordinate substrate.

This sequence belongs to the metallo-dependent hydrolases superfamily. DHOase family. Class II DHOase subfamily. Homodimer. Zn(2+) is required as a cofactor.

The catalysed reaction is (S)-dihydroorotate + H2O = N-carbamoyl-L-aspartate + H(+). It functions in the pathway pyrimidine metabolism; UMP biosynthesis via de novo pathway; (S)-dihydroorotate from bicarbonate: step 3/3. Its function is as follows. Catalyzes the reversible cyclization of carbamoyl aspartate to dihydroorotate. The polypeptide is Dihydroorotase (Cupriavidus taiwanensis (strain DSM 17343 / BCRC 17206 / CCUG 44338 / CIP 107171 / LMG 19424 / R1) (Ralstonia taiwanensis (strain LMG 19424))).